Consider the following 543-residue polypeptide: Zinc finger CCCH-type with G patch domain-containing protein (543 aa).

2 disordered regions span residues Ala55 to Ile79 and Thr95 to Asp132. Over residues Asp65 to Asp76 the composition is skewed to low complexity. The span at Asp118–Leu131 shows a compositional bias: acidic residues. Residues Pro186–Val209 form a C3H1-type zinc finger. A disordered region spans residues Pro272–Ala304. Acidic residues predominate over residues Leu277 to Ala304. The G-patch domain occupies Thr335–Glu381. The segment at Gly438 to Leu460 is disordered.

It is found in the nucleus. Functionally, transcription repressor. In Anopheles gambiae (African malaria mosquito), this protein is Zinc finger CCCH-type with G patch domain-containing protein.